The primary structure comprises 299 residues: Non-structural protein V (299 aa).

Positions 40–94 (SDNPGQDRATCKEEEAGSSGLSKPCLSAIGSTEGGAPRIRGQGSGESDDDAETLG) are disordered. Positions 110–120 (YHVYDHSGEAV) are interaction with host STAT1. Residues 133–143 (SGLDGDSTLSG) show a composition bias toward low complexity. Disordered stretches follow at residues 133–168 (SGLDGDSTLSGGDDESENSDVDIGEPDTEGYAITDR) and 204–229 (PKLGKTLNVPPPPNPSRASTSETPIK). A compositionally biased stretch (acidic residues) spans 144-160 (GDDESENSDVDIGEPDT). Zn(2+) is bound by residues His-232, Cys-251, Cys-255, Cys-267, Cys-269, Cys-272, Cys-276, and Cys-279.

This sequence belongs to the paramyxoviruses V protein family. As to quaternary structure, interacts with host IFIH1/MDA5 and DHX58/LGP2; these interactions are involved in the inhibition of the host type I interferon signaling pathway. Interacts with host TYK2; this interaction inhibits the type I interferon signaling pathway without affecting the type II pathway. Interacts with host IRF7; this interaction inhibits IRF7 translocation to the nucleus. Interacts with host CHUK. Interacts with host RELA/p65; this interaction inhibits the nuclear translocation of NF-KappaB. Interacts (via N-terminus) with host STAT1 and JAK1; these interactions inhibit STAT1 phosphorylation by Jak1 and thereby the type I interferon signaling pathway. Interacts (via C-terminus) with host STAT2; this interaction is involved in the inhibition of the host type I interferon signaling pathway. Forms a complex with host PPP1CA and PPP1CC; this interaction prevents dephosphorylation of host IFIH1/MDA5 and leads to the inhibition of the host type I interferon signaling pathway. Interacts with host IRF9; this interaction prevents the binding of IRF9 to STAT2 and thereby the type I interferon signaling pathway. Interacts with host RIGI regulatory protein (via CARDs domain) and host TRIM25 (via SPRY domain); these interactions prevent TRIM25-mediated ubiquitination of RIG-I and disrupts downstream RIG-I signaling.

It localises to the host cytoplasm. Plays an essential role in the inhibition of host immune response. Prevents the establishment of cellular antiviral state by blocking interferon-alpha/beta (IFN-alpha/beta) production and signaling pathway. Interacts with host IFIH1/MDA5 and DHX58/LGP2 to inhibit the transduction pathway involved in the activation of IFN-beta promoter, thus protecting the virus against cell antiviral state. Blocks the type I interferon signaling pathway by interacting with host TYK2 and thereby inhibiting downstream STAT1 and STAT2 phosphorylation. Blocks the type I interferon signaling pathway by disrupting the RIG-I signaling pathway. Moderately affects the type II interferon signaling. Prevents PP1alpha/gamma-mediated dephosphorylation of host IFIH1/MDA5 and thus blocks its activation. In Homo sapiens (Human), this protein is Non-structural protein V (P/V).